The chain runs to 368 residues: S-adenosylmethionine decarboxylase proenzyme (368 aa).

Active-site residues include Glu26 and Glu29. Ser83 acts as the Schiff-base intermediate with substrate; via pyruvic acid in catalysis. Ser83 is modified (pyruvic acid (Ser); by autocatalysis). Cys97 acts as the Proton donor; for catalytic activity in catalysis. Active-site proton acceptor; for processing activity residues include Ser246 and His261.

Belongs to the eukaryotic AdoMetDC family. Heterotetramer of two alpha and two beta chains. It depends on pyruvate as a cofactor. In terms of processing, is synthesized initially as an inactive proenzyme. Formation of the active enzyme involves a self-maturation process in which the active site pyruvoyl group is generated from an internal serine residue via an autocatalytic post-translational modification. Two non-identical subunits are generated from the proenzyme in this reaction, and the pyruvate is formed at the N-terminus of the alpha chain, which is derived from the carboxyl end of the proenzyme. The post-translation cleavage follows an unusual pathway, termed non-hydrolytic serinolysis, in which the side chain hydroxyl group of the serine supplies its oxygen atom to form the C-terminus of the beta chain, while the remainder of the serine residue undergoes an oxidative deamination to produce ammonia and the pyruvoyl group blocking the N-terminus of the alpha chain.

The catalysed reaction is S-adenosyl-L-methionine + H(+) = S-adenosyl 3-(methylsulfanyl)propylamine + CO2. Its pathway is amine and polyamine biosynthesis; S-adenosylmethioninamine biosynthesis; S-adenosylmethioninamine from S-adenosyl-L-methionine: step 1/1. In terms of biological role, essential for biosynthesis of the polyamines spermidine and spermine. Polyamines are essential for cell proliferation and are implicated in cellular processes, ranging from DNA replication to apoptosis. This is S-adenosylmethionine decarboxylase proenzyme from Caenorhabditis elegans.